A 391-amino-acid polypeptide reads, in one-letter code: 1-deoxy-D-xylulose 5-phosphate reductoisomerase (391 aa).

Residues T10, G11, S12, I13, N38, and N122 each coordinate NADPH. K123 lines the 1-deoxy-D-xylulose 5-phosphate pocket. E124 is a binding site for NADPH. D148 serves as a coordination point for Mn(2+). Positions 149, 150, 173, and 196 each coordinate 1-deoxy-D-xylulose 5-phosphate. E150 provides a ligand contact to Mn(2+). Residue G202 participates in NADPH binding. Residues S209, N214, K215, and E218 each contribute to the 1-deoxy-D-xylulose 5-phosphate site. E218 serves as a coordination point for Mn(2+).

It belongs to the DXR family. Requires Mg(2+) as cofactor. Mn(2+) is required as a cofactor.

The catalysed reaction is 2-C-methyl-D-erythritol 4-phosphate + NADP(+) = 1-deoxy-D-xylulose 5-phosphate + NADPH + H(+). It functions in the pathway isoprenoid biosynthesis; isopentenyl diphosphate biosynthesis via DXP pathway; isopentenyl diphosphate from 1-deoxy-D-xylulose 5-phosphate: step 1/6. Catalyzes the NADPH-dependent rearrangement and reduction of 1-deoxy-D-xylulose-5-phosphate (DXP) to 2-C-methyl-D-erythritol 4-phosphate (MEP). This Wolbachia pipientis subsp. Culex pipiens (strain wPip) protein is 1-deoxy-D-xylulose 5-phosphate reductoisomerase.